Here is a 121-residue protein sequence, read N- to C-terminus: Small ribosomal subunit protein uS13 (121 aa).

Residues 96-121 (PVRGQNTKNNARTRKGKAVAIAGKKK) are disordered. The span at 106-121 (ARTRKGKAVAIAGKKK) shows a compositional bias: basic residues.

This sequence belongs to the universal ribosomal protein uS13 family. As to quaternary structure, part of the 30S ribosomal subunit. Forms a loose heterodimer with protein S19. Forms two bridges to the 50S subunit in the 70S ribosome.

In terms of biological role, located at the top of the head of the 30S subunit, it contacts several helices of the 16S rRNA. In the 70S ribosome it contacts the 23S rRNA (bridge B1a) and protein L5 of the 50S subunit (bridge B1b), connecting the 2 subunits; these bridges are implicated in subunit movement. Contacts the tRNAs in the A and P-sites. The sequence is that of Small ribosomal subunit protein uS13 from Streptococcus suis (strain 05ZYH33).